Reading from the N-terminus, the 230-residue chain is Orotidine 5'-phosphate decarboxylase (230 aa).

Residues D12, K34, 61 to 70 (DMKLLDIDNT), T116, R177, Q186, and R207 contribute to the substrate site. K63 acts as the Proton donor in catalysis.

It belongs to the OMP decarboxylase family. Type 1 subfamily. As to quaternary structure, homodimer.

It carries out the reaction orotidine 5'-phosphate + H(+) = UMP + CO2. Its pathway is pyrimidine metabolism; UMP biosynthesis via de novo pathway; UMP from orotate: step 2/2. Catalyzes the decarboxylation of orotidine 5'-monophosphate (OMP) to uridine 5'-monophosphate (UMP). The chain is Orotidine 5'-phosphate decarboxylase from Rhizobium rhizogenes (strain K84 / ATCC BAA-868) (Agrobacterium radiobacter).